Consider the following 823-residue polypeptide: NAD-dependent histone deacetylase sirtuin-1 (823 aa).

The segment covering 41–67 has biased composition (low complexity); the sequence is LASTSTEAEAEAEATATTTEPATSELA. The interval 41-146 is disordered; that stretch reads LASTSTEAEA…SSSNCSSSVE (106 aa). Residues 72–95 show a composition bias toward basic and acidic residues; it reads GEIKTKTLAAREEQEIGANLEHKT. A compositionally biased stretch (acidic residues) spans 104-137; sequence EDEDDEEEEEEDDEEEEEDDEEGITGTSNEDEDS. The Deacetylase sirtuin-type domain occupies 204 to 499; it reads KLASVNTFDD…LCCDESVLTE (296 aa). Residues 229 to 248 and 313 to 316 each bind NAD(+); these read GAGV…NGIY and QNID. Catalysis depends on His-331, which acts as the Proton acceptor. Zn(2+) contacts are provided by Cys-339, Cys-342, Cys-363, and Cys-366. Residues 427–429, 452–454, and Ser-469 contribute to the NAD(+) site; these read GSS and NRE. A phosphoserine mark is found at Ser-618 and Ser-621. Over residues 698–707 the composition is skewed to acidic residues; the sequence is DYSDDDDEEE. 2 disordered regions span residues 698–722 and 777–823; these read DYSD…GNVG and IIEQ…LAAV. Residues 798–813 show a composition bias toward basic and acidic residues; sequence PSEENKQQTQIERSEE. Positions 814-823 are enriched in pro residues; that stretch reads SPPPGQLAAV.

Belongs to the sirtuin family. Class I subfamily. Interacts with the transcriptional repressors hairy (hry) and deadpan (dpn); via basic domains. Associates with the Esc/E(z) histone methyltransferase complex. Interacts directly with E(z) and HDAC1/Rpd3. The cofactor is Zn(2+).

It localises to the cytoplasm. Its subcellular location is the nucleus. It is found in the chromosome. The catalysed reaction is N(6)-acetyl-L-lysyl-[protein] + NAD(+) + H2O = 2''-O-acetyl-ADP-D-ribose + nicotinamide + L-lysyl-[protein]. Its function is as follows. NAD-dependent histone deacetylase involved in heterochromatic silencing. Mildly suppresses the heterochromatin-mediated silencing phenomenon known as position-effect variegation (PEV). Required for epigenetic silencing of the polycomb group proteins. Has histone H4 deacetylase activity in vitro. Required maternally for establishing proper segmentation of the embryo. Involved in sex determination. May be involved in the regulation of life span. This chain is NAD-dependent histone deacetylase sirtuin-1, found in Drosophila melanogaster (Fruit fly).